The chain runs to 437 residues: UDP-glucosyl transferase 79L3 (437 aa).

Residue His-18 is the Proton acceptor of the active site. Asp-117 (charge relay) is an active-site residue. Ser-254, Trp-312, Val-313, His-330, Ser-335, and Glu-338 together coordinate UDP.

It belongs to the UDP-glycosyltransferase family. Mainly expressed in flowers, flower buds and young leaves, and, to a lesser extent, in old leaves, stems and roots.

It participates in secondary metabolite biosynthesis; terpenoid biosynthesis. In terms of biological role, component of the oleanane-type triterpene saponins (e.g. saponarioside A and saponarioside B) biosynthetic pathway, leading to the production of natural products with detergent properties used as traditional sources of soap. A glycosyltransferase that mediates the conversion of QA-triFR to QA-triFRX via the elongation of the C-28 sugar chain with a D-xylose. The protein is UDP-glucosyl transferase 79L3 of Saponaria officinalis (Common soapwort).